The chain runs to 544 residues: Chaperonin GroEL (544 aa).

Residues 29–32, 86–90, Gly413, 477–479, and Asp493 each bind ATP; these read TLGP, DGTTT, and DVL.

This sequence belongs to the chaperonin (HSP60) family. In terms of assembly, forms a cylinder of 14 subunits composed of two heptameric rings stacked back-to-back. Interacts with the co-chaperonin GroES.

Its subcellular location is the cytoplasm. It carries out the reaction ATP + H2O + a folded polypeptide = ADP + phosphate + an unfolded polypeptide.. Together with its co-chaperonin GroES, plays an essential role in assisting protein folding. The GroEL-GroES system forms a nano-cage that allows encapsulation of the non-native substrate proteins and provides a physical environment optimized to promote and accelerate protein folding. The sequence is that of Chaperonin GroEL from Clostridium kluyveri (strain NBRC 12016).